The primary structure comprises 377 residues: Erythronate-4-phosphate dehydrogenase (377 aa).

Ser-45 and Thr-67 together coordinate substrate. NAD(+)-binding positions include Asp-147, 210–212 (ASR), and Asp-236. Arg-212 is a catalytic residue. The active site involves Glu-241. His-258 functions as the Proton donor in the catalytic mechanism. NAD(+) is bound at residue Gly-261. A substrate-binding site is contributed by Tyr-262.

It belongs to the D-isomer specific 2-hydroxyacid dehydrogenase family. PdxB subfamily. In terms of assembly, homodimer.

It is found in the cytoplasm. It catalyses the reaction 4-phospho-D-erythronate + NAD(+) = (R)-3-hydroxy-2-oxo-4-phosphooxybutanoate + NADH + H(+). The protein operates within cofactor biosynthesis; pyridoxine 5'-phosphate biosynthesis; pyridoxine 5'-phosphate from D-erythrose 4-phosphate: step 2/5. Its function is as follows. Catalyzes the oxidation of erythronate-4-phosphate to 3-hydroxy-2-oxo-4-phosphonooxybutanoate. The polypeptide is Erythronate-4-phosphate dehydrogenase (Aeromonas salmonicida (strain A449)).